Consider the following 248-residue polypeptide: Small ribosomal subunit protein eS6 (248 aa).

Positions 215–248 are disordered; that stretch reads VQRKKESKAKREEAKRRRSASIRESKSSVSSDKK. Basic and acidic residues predominate over residues 223–248; it reads AKREEAKRRRSASIRESKSSVSSDKK. Residues serine 233, serine 235, serine 239, serine 242, serine 244, and serine 245 each carry the phosphoserine modification.

The protein belongs to the eukaryotic ribosomal protein eS6 family. As to quaternary structure, component of the small ribosomal subunit. Part of the small subunit (SSU) processome, composed of more than 70 proteins and the RNA chaperone small nucleolar RNA (snoRNA) U3. Post-translationally, ribosomal protein S6 is the major substrate of protein kinases in eukaryote ribosomes. The phosphorylation is stimulated by growth factors, tumor promoting agents, and mitogens. It is dephosphorylated at growth arrest.

Its subcellular location is the cytoplasm. It is found in the nucleus. The protein resides in the nucleolus. Its function is as follows. Component of the 40S small ribosomal subunit. Plays an important role in controlling cell growth and proliferation through the selective translation of particular classes of mRNA. Part of the small subunit (SSU) processome, first precursor of the small eukaryotic ribosomal subunit. During the assembly of the SSU processome in the nucleolus, many ribosome biogenesis factors, an RNA chaperone and ribosomal proteins associate with the nascent pre-rRNA and work in concert to generate RNA folding, modifications, rearrangements and cleavage as well as targeted degradation of pre-ribosomal RNA by the RNA exosome. This is Small ribosomal subunit protein eS6 (RpS6) from Drosophila melanogaster (Fruit fly).